A 219-amino-acid polypeptide reads, in one-letter code: Guanylate kinase (219 aa).

Residues 15–194 (GLMLVISSPS…AFSSVRAIVE (180 aa)) form the Guanylate kinase-like domain. Residue 22-29 (SPSGAGKS) coordinates ATP.

This sequence belongs to the guanylate kinase family.

Its subcellular location is the cytoplasm. The enzyme catalyses GMP + ATP = GDP + ADP. In terms of biological role, essential for recycling GMP and indirectly, cGMP. The chain is Guanylate kinase from Rhizobium meliloti (strain 1021) (Ensifer meliloti).